The primary structure comprises 332 residues: Sesquiterpene synthase MBR_10393 (332 aa).

Aspartate 91 and aspartate 96 together coordinate Mg(2+). Residues 91 to 96 carry the DDXXXD motif motif; it reads DDLFVD. Arginine 184 contacts substrate. Asparagine 230, serine 234, and glutamate 238 together coordinate Mg(2+).

The protein belongs to the terpene synthase family. Mg(2+) is required as a cofactor.

It catalyses the reaction (2E,6E)-farnesyl diphosphate + H2O = (+)-corvol ether B + diphosphate. It carries out the reaction (2E,6E)-farnesyl diphosphate + H2O = (+)-corvol ether A + diphosphate. In terms of biological role, terpene synthase that catalyzes the conversion of (2E,6E)-farnesyl diphosphate (FPP) into sesquiterpenes which are important for fungi-environment interactions. Produces a mixture consisting of 8 sesquiterpenes including corvol ethers A and B, as well as traces of epizonarene, gamma-cadinene, delta-cadinene, alpha-cadinene, alpha-cadinol, and an unidentified sesquiterpene. The major product is corvol ether B. This is Sesquiterpene synthase MBR_10393 from Metarhizium brunneum (strain ARSEF 3297).